Consider the following 535-residue polypeptide: T-complex protein 1 subunit beta (535 aa).

An N-acetylalanine modification is found at alanine 2. Serine 3 carries the phosphoserine modification. Lysine 13 is subject to N6-acetyllysine. Glycine 44 lines the ADP pocket. Glycine 44 is an ATP binding site. A Mg(2+)-binding site is contributed by aspartate 97. Positions 98, 99, 100, 101, 168, and 169 each coordinate ADP. ATP contacts are provided by glycine 98, threonine 99, and threonine 100. Lysine 181 bears the N6-acetyllysine mark. Residue lysine 248 forms a Glycyl lysine isopeptide (Lys-Gly) (interchain with G-Cter in SUMO2) linkage. Residue serine 260 is modified to Phosphoserine. Threonine 261 is modified (phosphothreonine). Residues glycine 410, glutamate 495, and lysine 500 each coordinate ADP. Positions 495 and 500 each coordinate ATP.

This sequence belongs to the TCP-1 chaperonin family. In terms of assembly, component of the chaperonin-containing T-complex (TRiC), a hexadecamer composed of two identical back-to-back stacked rings enclosing a protein folding chamber. Each ring is made up of eight different subunits: TCP1/CCT1, CCT2, CCT3, CCT4, CCT5, CCT6A/CCT6, CCT7, CCT8. Interacts with PACRG. Interacts with FLCN. Interacts with DLEC1. Interacts with SVEP1. The N-terminus is blocked.

The protein resides in the cytoplasm. It catalyses the reaction ATP + H2O = ADP + phosphate + H(+). In terms of biological role, component of the chaperonin-containing T-complex (TRiC), a molecular chaperone complex that assists the folding of actin, tubulin and other proteins upon ATP hydrolysis. The TRiC complex mediates the folding of WRAP53/TCAB1, thereby regulating telomere maintenance. As part of the TRiC complex may play a role in the assembly of BBSome, a complex involved in ciliogenesis regulating transports vesicles to the cilia. The chain is T-complex protein 1 subunit beta (Cct2) from Mus musculus (Mouse).